A 459-amino-acid chain; its full sequence is UDP-N-acetylmuramoylalanine--D-glutamate ligase (459 aa).

An ATP-binding site is contributed by 118 to 124 (GTNGKTT).

This sequence belongs to the MurCDEF family.

It localises to the cytoplasm. The enzyme catalyses UDP-N-acetyl-alpha-D-muramoyl-L-alanine + D-glutamate + ATP = UDP-N-acetyl-alpha-D-muramoyl-L-alanyl-D-glutamate + ADP + phosphate + H(+). It functions in the pathway cell wall biogenesis; peptidoglycan biosynthesis. In terms of biological role, cell wall formation. Catalyzes the addition of glutamate to the nucleotide precursor UDP-N-acetylmuramoyl-L-alanine (UMA). In Desulfosudis oleivorans (strain DSM 6200 / JCM 39069 / Hxd3) (Desulfococcus oleovorans), this protein is UDP-N-acetylmuramoylalanine--D-glutamate ligase.